A 384-amino-acid polypeptide reads, in one-letter code: F-box/kelch-repeat protein At1g64840 (384 aa).

In terms of domain architecture, F-box spans 3 to 51 (PNWSQLPEELLNLISKNLDNCFDVVHARSICRSWRSAFPFPSSLSTLSY). Kelch repeat units lie at residues 87 to 137 (PEYF…PLGF) and 259 to 309 (NPFP…CCSA).

The polypeptide is F-box/kelch-repeat protein At1g64840 (Arabidopsis thaliana (Mouse-ear cress)).